The following is a 341-amino-acid chain: Glyceraldehyde-3-phosphate dehydrogenase 2 (341 aa).

NAD(+)-binding positions include 12–13 (RI), R78, and T120. Residues 152-154 (SCT) and T183 contribute to the D-glyceraldehyde 3-phosphate site. The active-site Nucleophile is C153. N184 contacts NAD(+). Residues R198, 211–212 (TG), and R234 contribute to the D-glyceraldehyde 3-phosphate site. N313 contributes to the NAD(+) binding site.

It belongs to the glyceraldehyde-3-phosphate dehydrogenase family. Homotetramer.

Its subcellular location is the cytoplasm. The catalysed reaction is D-glyceraldehyde 3-phosphate + phosphate + NAD(+) = (2R)-3-phospho-glyceroyl phosphate + NADH + H(+). It participates in carbohydrate degradation; glycolysis; pyruvate from D-glyceraldehyde 3-phosphate: step 1/5. Its function is as follows. Catalyzes the oxidative phosphorylation of glyceraldehyde 3-phosphate (G3P) to 1,3-bisphosphoglycerate (BPG) using the cofactor NAD. The first reaction step involves the formation of a hemiacetal intermediate between G3P and a cysteine residue, and this hemiacetal intermediate is then oxidized to a thioester, with concomitant reduction of NAD to NADH. The reduced NADH is then exchanged with the second NAD, and the thioester is attacked by a nucleophilic inorganic phosphate to produce BPG. The chain is Glyceraldehyde-3-phosphate dehydrogenase 2 (gapA2) from Staphylococcus epidermidis (strain ATCC 12228 / FDA PCI 1200).